We begin with the raw amino-acid sequence, 551 residues long: Xylulose kinase (551 aa).

Positions 114, 185, 295, and 296 each coordinate substrate. ATP is bound by residues Trp-370, 456–457, and Asn-460; that span reads GA.

It belongs to the FGGY kinase family. Monomer.

The enzyme catalyses D-xylulose + ATP = D-xylulose 5-phosphate + ADP + H(+). Phosphorylates D-xylulose to produce D-xylulose 5-phosphate, a molecule that may play an important role in the regulation of glucose metabolism and lipogenesis. The polypeptide is Xylulose kinase (Xylb) (Mus musculus (Mouse)).